A 271-amino-acid chain; its full sequence is Protein FAM110D (271 aa).

Positions 1–13 (MLLSSPTTPSRGR) are enriched in polar residues. 3 disordered regions span residues 1–84 (MLLS…PDSL), 118–149 (DAAP…TGKR), and 186–242 (PQSW…GRPT).

The protein belongs to the FAM110 family.

This Mus musculus (Mouse) protein is Protein FAM110D.